Here is a 92-residue protein sequence, read N- to C-terminus: uncharacterized protein (92 aa).

This is an uncharacterized protein from Sulfolobus spindle-shape virus 1 (SSV1).